The primary structure comprises 125 residues: Calcitonin receptor-stimulating peptide 3 (125 aa).

The first 25 residues, 1–25 (MGFWKFPPFLILSILVLYQAGMLHA), serve as a signal peptide directing secretion. Residues 26 to 79 (APFRMALGSSFDSATLTEEEMSLLLVAMVKDYVQMKATVLEQETEDFSITTQER) constitute a propeptide that is removed on maturation. Residues Cys81 and Cys86 are joined by a disulfide bond. A Leucine amide modification is found at Leu116. Residues 122-125 (QPQA) constitute a propeptide that is removed on maturation.

Belongs to the calcitonin family. Mainly expressed in the thyroid gland and CNS. Found in the nerve cells of cerebrum, hippocampus, hypothalamus, pons/midbrain and thalamus.

It localises to the secreted. In Sus scrofa (Pig), this protein is Calcitonin receptor-stimulating peptide 3 (CRSP3).